The primary structure comprises 390 residues: MSVYNPNDADFAFTIGIEEEYQIVDPETRELRSYITQILEPGRTILREQIKPEMHQSIVEVGTRPCRTISEARAEIVRLRGAIAGLAARHNLRIVAAGTHPFSSWMQQEITPDERYRMVVGEMQEAALQLLIFGMHCHIGMPNNEVAIELMNVARYICPHLLALSTSSPFWMGRNTGFKSYRSVIFSTFPRTGIPPTFHSASEFERYVQLLINTGCIDNGKKIWWDLRPHPFFGTLEFRVCDIATKVEECLALAATMQALIVKFYTMFEENTTFRVYRRALINENKWRAQRWGLDGKLIDFGKRKEVEAKALVHEIVELVDDVVDMLGSRKEVEYLLTIVDQGTSADRQLRVFAETNDLKAVVDSLMNETIEGVPVMTFDTESSVQTAHS.

This sequence belongs to the glutamate--cysteine ligase type 2 family. YbdK subfamily.

The catalysed reaction is L-cysteine + L-glutamate + ATP = gamma-L-glutamyl-L-cysteine + ADP + phosphate + H(+). Its function is as follows. ATP-dependent carboxylate-amine ligase which exhibits weak glutamate--cysteine ligase activity. This chain is Putative glutamate--cysteine ligase 2, found in Chloroflexus aggregans (strain MD-66 / DSM 9485).